Reading from the N-terminus, the 724-residue chain is Solute carrier organic anion transporter family member 4C1 (724 aa).

The Cytoplasmic segment spans residues 1–105; it reads MKSAKGIENL…QCLQRCNTPG (105 aa). 5 positions are modified to phosphoserine: Ser15, Ser16, Ser24, Ser26, and Ser28. The segment at 30–71 is disordered; that stretch reads IEVSALSSDPQRENSQPQELQKPQEPQKSPEPSLPSAPPNVS. The span at 44–60 shows a compositional bias: low complexity; it reads SQPQELQKPQEPQKSPE. Residues 106–126 traverse the membrane as a helical segment; that stretch reads GFLLHYCLLAVTQGIVVNGLV. At 127 to 145 the chain is on the extracellular side; it reads NISISTVEKRYEMKSSLTG. The helical transmembrane segment at 146-166 threads the bilayer; the sequence is LISSSYDISFCLLSLFVSFFG. Over 167-172 the chain is Cytoplasmic; that stretch reads ERGHKP. Residues 173 to 197 form a helical membrane-spanning segment; it reads RWLAFAAFMIGLGALVFSLPQFFSG. Over 198 to 223 the chain is Extracellular; the sequence is EYKLGSLFEDTCVTTRNSTSCTSSTS. The chain crosses the membrane as a helical span at residues 224-254; sequence SLSNYLYVFILGQLLLGAGGTPLYTLGTAFL. The Cytoplasmic portion of the chain corresponds to 255–274; that stretch reads DDSVPTHKSSLYIGTGYAMS. A helical transmembrane segment spans residues 275–295; sequence ILGPAIGYVLGGQLLTIYIDV. At 296–311 the chain is on the extracellular side; the sequence is AMGESTDVTEDDPRWL. Residues 312-336 traverse the membrane as a helical segment; sequence GAWWIGFLLSWIFAWSLIIPFSCFP. Residues 337-377 are Cytoplasmic-facing; that stretch reads KHLPGTAEIQAGKTSQAHQSNSNADVKFGKSIKDFPAALKN. Residues 378–399 form a helical membrane-spanning segment; it reads LMKNAVFMCLVLSTSSEALITT. The Extracellular segment spans residues 400–419; that stretch reads GFATFLPKFIENQFGLTSSF. Residues 420-443 form a helical membrane-spanning segment; the sequence is AATLGGAVLIPGAALGQILGGFLV. The Cytoplasmic segment spans residues 444–447; that stretch reads SKFR. The chain crosses the membrane as a helical span at residues 448-471; that stretch reads MTCKNTMKFALFTSGVALTLSFVF. Residues 472 to 580 lie on the Extracellular side of the membrane; the sequence is MYAKCENEPF…ETHCAKLPIF (109 aa). Positions 495-549 constitute a Kazal-like domain; sequence GNLIAPCNANCNCSRSYYYPVCGDGVQYFSPCFAGCSNPVAHRKPKVYYNCSCIE. 3 disulfides stabilise this stretch: Cys501–Cys530, Cys507–Cys526, and Cys516–Cys547. Residues 581–603 traverse the membrane as a helical segment; sequence LCIFFIVIIFTFMAGTPITVSIL. The Cytoplasmic portion of the chain corresponds to 604–612; sequence RCVNHRQRS. The helical transmembrane segment at 613–638 threads the bilayer; the sequence is LALGIQFMVLRLLGTIPGPIIFGFTI. Residues 639-672 are Extracellular-facing; the sequence is DSTCILWDINDCGIKGACWIYDNIKMAHMLVAIS. The chain crosses the membrane as a helical span at residues 673–690; sequence VTCKVITMFFNGFAIFLY. At 691–724 the chain is on the cytoplasmic side; sequence KPPPSATDVSFHKENAVVTNVLAEQDLNKIVKEG.

Belongs to the organo anion transporter (TC 2.A.60) family. In terms of tissue distribution, predominantly expressed in kidney but also weakly expressed in both fetal liver and kidney.

The protein resides in the basolateral cell membrane. It catalyses the reaction estrone 3-sulfate(out) = estrone 3-sulfate(in). It carries out the reaction L-thyroxine(out) = L-thyroxine(in). The enzyme catalyses 3,3',5-triiodo-L-thyronine(out) = 3,3',5-triiodo-L-thyronine(in). The catalysed reaction is chenodeoxycholate(out) = chenodeoxycholate(in). It catalyses the reaction glycocholate(out) = glycocholate(in). It carries out the reaction L-homoarginine(in) = L-homoarginine(out). The enzyme catalyses L-arginine(in) = L-arginine(out). The catalysed reaction is N(omega),N(omega)-dimethyl-L-arginine(out) = N(omega),N(omega)-dimethyl-L-arginine(in). Its function is as follows. Mediates the transport of organic anions such as steroids (estrone 3-sulfate, chenodeoxycholate, glycocholate) and thyroid hormones (3,3',5-triiodo-L-thyronine (T3), L-thyroxine (T4)), in the kidney. Capable of transporting cAMP and pharmacological substances such as digoxin, ouabain and methotrexate. Transport is independent of sodium, chloride ion, and ATP. Transport activity is stimulated by an acidic extracellular environment due to increased substrate affinity to the transporter. The driving force for this transport activity is currently not known. The role of hydrogencarbonate (HCO3(-), bicarbonate) as the probable counteranion that exchanges for organic anions is still not well defined. Functions as an uptake transporter at the apical membrane, suggesting a role in renal reabsorption. Involved in the renal secretion of the uremic toxin ADMA (N(omega),N(omega)-dimethyl-L-arginine or asymmetrical dimethylarginine), which is associated to cardiovascular events and mortality, and the structurally related amino acids L-arginine and L-homoarginine (a cardioprotective biomarker). Can act bidirectionally, suggesting a dual protective role of this transport protein; exporting L-homoarginine after being synthesized in proximal tubule cells, and mediating uptake of ADMA from the blood into proximal tubule cells where it is degraded by the enzyme dimethylarginine dimethylaminohydrolase 1 (DDAH1). May be involved in sperm maturation by enabling directed movement of organic anions and compounds within or between cells. This ion-transporting process is important to maintain the strict epididymal homeostasis necessary for sperm maturation. May have a role in secretory functions since seminal vesicle epithelial cells are assumed to secrete proteins involved in decapacitation by modifying surface proteins to facilitate the acquisition of the ability to fertilize the egg. The sequence is that of Solute carrier organic anion transporter family member 4C1 from Homo sapiens (Human).